Here is a 584-residue protein sequence, read N- to C-terminus: 2-succinyl-5-enolpyruvyl-6-hydroxy-3-cyclohexene-1-carboxylate synthase (584 aa).

It belongs to the TPP enzyme family. MenD subfamily. Homodimer. It depends on Mg(2+) as a cofactor. The cofactor is Mn(2+). Requires thiamine diphosphate as cofactor.

It carries out the reaction isochorismate + 2-oxoglutarate + H(+) = 5-enolpyruvoyl-6-hydroxy-2-succinyl-cyclohex-3-ene-1-carboxylate + CO2. The protein operates within quinol/quinone metabolism; 1,4-dihydroxy-2-naphthoate biosynthesis; 1,4-dihydroxy-2-naphthoate from chorismate: step 2/7. It functions in the pathway quinol/quinone metabolism; menaquinone biosynthesis. Catalyzes the thiamine diphosphate-dependent decarboxylation of 2-oxoglutarate and the subsequent addition of the resulting succinic semialdehyde-thiamine pyrophosphate anion to isochorismate to yield 2-succinyl-5-enolpyruvyl-6-hydroxy-3-cyclohexene-1-carboxylate (SEPHCHC). The polypeptide is 2-succinyl-5-enolpyruvyl-6-hydroxy-3-cyclohexene-1-carboxylate synthase (Bacillus cytotoxicus (strain DSM 22905 / CIP 110041 / 391-98 / NVH 391-98)).